A 135-amino-acid polypeptide reads, in one-letter code: Small ribosomal subunit protein uS9 (135 aa).

It belongs to the universal ribosomal protein uS9 family.

The protein is Small ribosomal subunit protein uS9 of Petrotoga mobilis (strain DSM 10674 / SJ95).